The chain runs to 336 residues: Ornithine carbamoyltransferase, catabolic (336 aa).

Carbamoyl phosphate is bound by residues 57–60 (STRT), Q84, R108, and 135–138 (HPTQ). L-ornithine-binding positions include N168, D232, and 236–237 (SM). Residues 274 to 275 (CL) and R321 contribute to the carbamoyl phosphate site.

Belongs to the aspartate/ornithine carbamoyltransferase superfamily. OTCase family.

The protein resides in the cytoplasm. The catalysed reaction is carbamoyl phosphate + L-ornithine = L-citrulline + phosphate + H(+). The protein operates within amino-acid degradation; L-arginine degradation via ADI pathway; carbamoyl phosphate from L-arginine: step 2/2. Its function is as follows. Reversibly catalyzes the transfer of the carbamoyl group from carbamoyl phosphate (CP) to the N(epsilon) atom of ornithine (ORN) to produce L-citrulline. This is Ornithine carbamoyltransferase, catabolic (arcB) from Ectopseudomonas mendocina (Pseudomonas mendocina).